We begin with the raw amino-acid sequence, 461 residues long: Transcription factor phm6 (461 aa).

A DNA-binding region (zn(2)-C6 fungal-type) is located at residues cysteine 18–cysteine 50. Disordered stretches follow at residues arginine 55 to threonine 79 and leucine 256 to threonine 278. Positions leucine 256–serine 274 are enriched in low complexity.

Its subcellular location is the nucleus. Transcription factor that regulates the expression of the gene cluster that mediates the biosynthesis of the trans-fused decalin-containing tetramic acid phomasetin. The sequence is that of Transcription factor phm6 from Pyrenochaetopsis sp.